The following is a 338-amino-acid chain: Lumican (338 aa).

A signal peptide spans Met1–Gly18. Gln19 carries the pyrrolidone carboxylic acid modification. Residues Tyr20, Tyr21, Tyr23, and Tyr30 each carry the sulfotyrosine modification. An LRRNT domain is found at Phe28–Pro66. LRR repeat units follow at residues Gly67 to Asn88, Asp91 to Lys114, Gln117 to Lys137, Ser138 to Val159, Asn160 to Lys181, Ser185 to Thr205, Ser206 to Arg227, and Gly230 to Ser250. The N-linked (GlcNAc...) (keratan sulfate) asparagine glycan is linked to Asn88. Asn127 is a glycosylation site (N-linked (GlcNAc...) (keratan sulfate) asparagine). The N-linked (GlcNAc...) (keratan sulfate) asparagine glycan is linked to Asn160. Asn252 carries an N-linked (GlcNAc...) (keratan sulfate) asparagine glycan. LRR repeat units lie at residues Ser255–Leu276 and Glu277–Lys296. Cys295 and Cys328 form a disulfide bridge. Ser304 carries the post-translational modification Phosphoserine. The stretch at Lys305–Tyr326 is one LRR 11 repeat.

It belongs to the small leucine-rich proteoglycan (SLRP) family. SLRP class II subfamily. Binds to laminin. In terms of processing, contains keratan sulfate.

The protein localises to the secreted. Its subcellular location is the extracellular space. It localises to the extracellular matrix. The chain is Lumican (Lum) from Rattus norvegicus (Rat).